The sequence spans 116 residues: MRHQCRVPLLGKPADQRKALLRSLTTELIRHGQIMTTKTRAKAVRSEVERMITLAKDGSLAARRRALGYMYDKQLVHSLFADVQSRYGNRNGGYTRITRTLRRRGDNAEMAIIELV.

This sequence belongs to the bacterial ribosomal protein bL17 family. As to quaternary structure, part of the 50S ribosomal subunit. Contacts protein L32.

The sequence is that of Large ribosomal subunit protein bL17 from Rippkaea orientalis (strain PCC 8801 / RF-1) (Cyanothece sp. (strain PCC 8801)).